The primary structure comprises 268 residues: Sterol uptake protein 2 (268 aa).

This sequence belongs to the SUT1 family.

Its subcellular location is the nucleus. Its function is as follows. Putative transcription factor involved in the regulation of the activity of the cAMP/protein kinase A pathway. Involved in sterol uptake. With SUT1, positively regulates mating by repressing the expression of the mating inhibitors NCE102, PRR2 and RHO5 in response to pheromone. The protein is Sterol uptake protein 2 of Saccharomyces cerevisiae (strain ATCC 204508 / S288c) (Baker's yeast).